Consider the following 309-residue polypeptide: Malate dehydrogenase (309 aa).

Residues 10 to 15 and Asp-34 contribute to the NAD(+) site; that span reads GAGNVG. Substrate is bound by residues Arg-83 and Arg-89. NAD(+)-binding positions include Asn-96 and 119–121; that span reads VTN. Positions 121 and 152 each coordinate substrate. The Proton acceptor role is filled by His-176.

This sequence belongs to the LDH/MDH superfamily. MDH type 3 family.

The catalysed reaction is (S)-malate + NAD(+) = oxaloacetate + NADH + H(+). Catalyzes the reversible oxidation of malate to oxaloacetate. In Desulforudis audaxviator (strain MP104C), this protein is Malate dehydrogenase.